The primary structure comprises 41 residues: Large ribosomal subunit protein bL36 (41 aa).

Belongs to the bacterial ribosomal protein bL36 family.

The chain is Large ribosomal subunit protein bL36 from Xylella fastidiosa (strain M23).